The primary structure comprises 648 residues: EF-hand domain-containing protein 1 (648 aa).

The required for its localization in the mitotic spindle and interaction with alpha-tubulin stretch occupies residues 1–45 (MGTNPVHGLPFLPGSSFTDSTKTAFHRSQTLNYRNGYAVVRRPTM). DM10 domains follow at residues 93-198 (DKKV…ESQG), 239-359 (DKQV…KDKF), and 416-520 (DNKV…ESNA). Residues 582 to 617 (SYKENLRETFQMYDKDESGYVDRETFFKICETLNVP) enclose the EF-hand domain.

Microtubule inner protein component of sperm flagellar doublet microtubules. Interacts with the C-terminus of CACNA1E. Interacts with alpha-tubulin. In terms of tissue distribution, expressed in adult brain including hippocampus, cerebellum, cerebral cortex, thalamus, hypothalamus, amygdala and upper brainstem. Expressed in soma and dentrites of pyramidal neurons of the hippocampal CA1 region, pyramidal neurons of the cerebral cortex and Purkinje cells of cerebellum. Highly expressed in testis, trachea, and oviduct, moderately in lung, and slightly in brain. Highly expressed in sperm flagella and tracheal cilia (at protein level).

The protein resides in the cytoplasm. It localises to the cytoskeleton. The protein localises to the cilium axoneme. It is found in the flagellum axoneme. Its subcellular location is the microtubule organizing center. The protein resides in the centrosome. It localises to the spindle. The protein localises to the spindle pole. Functionally, microtubule inner protein (MIP) part of the dynein-decorated doublet microtubules (DMTs) in cilia axoneme, which is required for motile cilia beating. Microtubule-associated protein which regulates cell division and neuronal migration during cortical development. Necessary for radial and tangential cell migration during brain development, possibly acting as a regulator of cell morphology and process formation during migration. May enhance calcium influx through CACNA1E and stimulate programmed cell death. Overexpression of EFHC1 in hippocampal primary culture neurons induced apoptosis. This chain is EF-hand domain-containing protein 1 (Efhc1), found in Mus musculus (Mouse).